A 999-amino-acid polypeptide reads, in one-letter code: Hypoxia up-regulated protein 1 (999 aa).

Residues 1 to 32 (MADKVRRQRPRRRVCWALVAVLLADLLALSDT) form the signal peptide. Residues asparagine 155, asparagine 222, and asparagine 515 are each glycosylated (N-linked (GlcNAc...) asparagine). Phosphoserine is present on serine 567. The segment at 578–694 (GNTISSLFGG…KKQKPARKRR (117 aa)) is disordered. N-linked (GlcNAc...) asparagine glycosylation occurs at asparagine 596. Composition is skewed to basic and acidic residues over residues 611–626 (GSKDEPGEQVELKEEA) and 641–672 (PKGDATPEGEKATEKENGDKSEAQKPSEKAEA). Asparagine 830, asparagine 862, and asparagine 869 each carry an N-linked (GlcNAc...) asparagine glycan. An N6-acetyllysine modification is found at lysine 883. A disordered region spans residues 909-999 (AKFTKPRPRP…QKRPLKNDEL (91 aa)). N-linked (GlcNAc...) asparagine glycans are attached at residues asparagine 922 and asparagine 931. Residues 996–999 (NDEL) carry the Prevents secretion from ER motif.

This sequence belongs to the heat shock protein 70 family. In terms of assembly, part of a large chaperone multiprotein complex comprising DNAJB11, HSP90B1, HSPA5, HYOU, PDIA2, PDIA4, PDIA6, PPIB, SDF2L1, UGGT1 and very small amounts of ERP29, but not, or at very low levels, CALR nor CANX. Highly expressed in tissues that contain well-developed endoplasmic reticulum and synthesize large amounts of secretory proteins. Highly expressed in liver and pancreas and lower expression in brain and kidney. Also expressed in macrophages within aortic atherosclerotic plaques, and in breast cancers.

It is found in the endoplasmic reticulum lumen. Has a pivotal role in cytoprotective cellular mechanisms triggered by oxygen deprivation. Promotes HSPA5/BiP-mediated ATP nucleotide exchange and thereby activates the unfolded protein response (UPR) pathway in the presence of endoplasmic reticulum stress. May play a role as a molecular chaperone and participate in protein folding. The chain is Hypoxia up-regulated protein 1 (HYOU1) from Homo sapiens (Human).